A 477-amino-acid polypeptide reads, in one-letter code: Protein nucleotidyltransferase YdiU (477 aa).

Positions 89, 91, 92, 112, 124, 125, 178, and 185 each coordinate ATP. The active-site Proton acceptor is the D257. Mg(2+)-binding residues include N258 and D267. D267 contacts ATP.

This sequence belongs to the SELO family. It depends on Mg(2+) as a cofactor. The cofactor is Mn(2+).

It catalyses the reaction L-seryl-[protein] + ATP = 3-O-(5'-adenylyl)-L-seryl-[protein] + diphosphate. The enzyme catalyses L-threonyl-[protein] + ATP = 3-O-(5'-adenylyl)-L-threonyl-[protein] + diphosphate. The catalysed reaction is L-tyrosyl-[protein] + ATP = O-(5'-adenylyl)-L-tyrosyl-[protein] + diphosphate. It carries out the reaction L-histidyl-[protein] + UTP = N(tele)-(5'-uridylyl)-L-histidyl-[protein] + diphosphate. It catalyses the reaction L-seryl-[protein] + UTP = O-(5'-uridylyl)-L-seryl-[protein] + diphosphate. The enzyme catalyses L-tyrosyl-[protein] + UTP = O-(5'-uridylyl)-L-tyrosyl-[protein] + diphosphate. In terms of biological role, nucleotidyltransferase involved in the post-translational modification of proteins. It can catalyze the addition of adenosine monophosphate (AMP) or uridine monophosphate (UMP) to a protein, resulting in modifications known as AMPylation and UMPylation. The protein is Protein nucleotidyltransferase YdiU of Synechocystis sp. (strain ATCC 27184 / PCC 6803 / Kazusa).